A 134-amino-acid polypeptide reads, in one-letter code: Small ribosomal subunit protein uS12 (134 aa).

The interval 1–26 (MPTTQQLLRKGRTTLQKKSKVPALKG) is disordered. Positions 9–20 (RKGRTTLQKKSK) are enriched in basic residues. Asp-89 carries the post-translational modification 3-methylthioaspartic acid. Residues 103 to 134 (DTQGVKDRNKSRSKYGTKKPKAGAAAAGAKKK) are disordered. Basic residues predominate over residues 113 to 123 (SRSKYGTKKPK). Residues 124-134 (AGAAAAGAKKK) show a composition bias toward low complexity.

The protein belongs to the universal ribosomal protein uS12 family. As to quaternary structure, part of the 30S ribosomal subunit. Contacts proteins S8 and S17. May interact with IF1 in the 30S initiation complex.

In terms of biological role, with S4 and S5 plays an important role in translational accuracy. Functionally, interacts with and stabilizes bases of the 16S rRNA that are involved in tRNA selection in the A site and with the mRNA backbone. Located at the interface of the 30S and 50S subunits, it traverses the body of the 30S subunit contacting proteins on the other side and probably holding the rRNA structure together. The combined cluster of proteins S8, S12 and S17 appears to hold together the shoulder and platform of the 30S subunit. This is Small ribosomal subunit protein uS12 from Deinococcus geothermalis (strain DSM 11300 / CIP 105573 / AG-3a).